A 726-amino-acid chain; its full sequence is DNA ligase (726 aa).

NAD(+) contacts are provided by residues 34–38, 83–84, and Glu-115; these read DAEYD and SL. Lys-117 serves as the catalytic N6-AMP-lysine intermediate. Residues Arg-138, Glu-190, Lys-306, and Lys-330 each coordinate NAD(+). Cys-424, Cys-427, Cys-442, and Cys-448 together coordinate Zn(2+). The BRCT domain occupies 608–698; the sequence is SRGNALAGKT…RTADDQATPA (91 aa). The segment at 690 to 726 is disordered; that stretch reads TADDQATPASDRRAATASVPPSDDAPGSPRQLDFDLT.

This sequence belongs to the NAD-dependent DNA ligase family. LigA subfamily. Mg(2+) is required as a cofactor. The cofactor is Mn(2+).

It catalyses the reaction NAD(+) + (deoxyribonucleotide)n-3'-hydroxyl + 5'-phospho-(deoxyribonucleotide)m = (deoxyribonucleotide)n+m + AMP + beta-nicotinamide D-nucleotide.. DNA ligase that catalyzes the formation of phosphodiester linkages between 5'-phosphoryl and 3'-hydroxyl groups in double-stranded DNA using NAD as a coenzyme and as the energy source for the reaction. It is essential for DNA replication and repair of damaged DNA. The polypeptide is DNA ligase (Roseiflexus sp. (strain RS-1)).